Here is a 291-residue protein sequence, read N- to C-terminus: MNTVVNISNEGKTEDLESVKRPVIYPEEEEKAEESESSIDIDALLILSTVTVWAFRLLFERALGNLFFYIVGWGNLGYLVYSTIRRLFLKSEESRDKGLDVSDIMAIMCLLLHLFMFTLLVCNSFVFSGSIGNIADVIIRNPLGILMASRNFLDSQQMMESQRAYYVSLTVVQMAFAIVLAVTFDYGNDAVAPLELLRALLLLMLVGTTFCYIEDVVIRNLKISKEKVKRFRLLAKMMLVIGCTTAGYYMMDRMFKLATTEMASTVPTPTAPRYPLASTVPPYTLLDGEYC.

To E.cuniculi ECU03_0120.

This is an uncharacterized protein from Encephalitozoon cuniculi (strain GB-M1) (Microsporidian parasite).